Reading from the N-terminus, the 97-residue chain is Protein C4 (97 aa).

2 disordered regions span residues 1–31 and 75–97; these read MGLL…PHTG and ANLP…PSIY. The N-myristoyl glycine; by host moiety is linked to residue Gly-2. A compositionally biased stretch (polar residues) spans 77–88; sequence LPTTHMPRQSIQ.

Belongs to the geminiviridae protein AC4/C4 family.

The protein localises to the host cell membrane. Its function is as follows. Pathogenicity determinant. May act as a suppressor of RNA-mediated gene silencing, also known as post-transcriptional gene silencing (PTGS), a mechanism of plant viral defense that limits the accumulation of viral RNAs. The chain is Protein C4 from Tomato yellow leaf curl China virus (TYLCCNV).